The sequence spans 512 residues: Glycerol kinase 2 (512 aa).

ADP is bound at residue threonine 18. Positions 18, 19, and 20 each coordinate ATP. Threonine 18 contributes to the sn-glycerol 3-phosphate binding site. Residue arginine 22 coordinates ADP. Sn-glycerol 3-phosphate contacts are provided by arginine 88, glutamate 89, tyrosine 140, and aspartate 255. Positions 88, 89, 140, 255, and 256 each coordinate glycerol. The ADP site is built by threonine 277 and glycine 321. ATP-binding residues include threonine 277, glycine 321, glutamine 325, and glycine 422. The ADP site is built by glycine 422 and asparagine 426.

Belongs to the FGGY kinase family.

It carries out the reaction glycerol + ATP = sn-glycerol 3-phosphate + ADP + H(+). The protein operates within polyol metabolism; glycerol degradation via glycerol kinase pathway; sn-glycerol 3-phosphate from glycerol: step 1/1. With respect to regulation, inhibited by fructose 1,6-bisphosphate (FBP). Its function is as follows. Key enzyme in the regulation of glycerol uptake and metabolism. Catalyzes the phosphorylation of glycerol to yield sn-glycerol 3-phosphate. The chain is Glycerol kinase 2 from Streptomyces coelicolor (strain ATCC BAA-471 / A3(2) / M145).